The primary structure comprises 1487 residues: Golgin subfamily A member 3 (1487 aa).

M1 carries the N-acetylmethionine modification. The segment at 1–118 (MDGASAKQDG…GTSAEGSVRK (118 aa)) is disordered. 2 positions are modified to phosphoserine: S18 and S60. Residues 62-74 (DRSSQVAICQNGQ) show a composition bias toward polar residues. The interval 121-141 (LQSLRLSLPMQETQLCSTASS) is interaction with GOPC. The interval 172 to 257 (ERSSQPATKM…DYRTEDPSDS (86 aa)) is golgi-targeting domain. 2 disordered regions span residues 221–321 (PKVG…SSLS) and 365–394 (AAQHQDQNQEANGEVRSRRDSICSSVSMES). 3 stretches are compositionally biased toward low complexity: residues 269 to 288 (SSLKQSRSSTSVVSEVSPSS), 312 to 321 (SDSSSHSSLS), and 365 to 375 (AAQHQDQNQEA). A Phosphoserine modification is found at S270. A coiled-coil region spans residues 358–1454 (KDVLQAAAAQ…TITVHESLSS (1097 aa)). Phosphoserine occurs at positions 381, 385, and 461. Basic and acidic residues predominate over residues 785 to 796 (KEELDRGARRLE). Residues 785 to 804 (KEELDRGARRLEEDTEETSG) are disordered. Position 979 is a phosphoserine (S979). Positions 1372 to 1382 (RGAAKKKEPKG) are enriched in basic and acidic residues. 2 disordered regions span residues 1372–1396 (RGAAKKKEPKGESNSSSPATPIKIP) and 1458–1487 (VEAAPAEHAHPRGDTKLHNQNSVPRDGLGQ). S1387 carries the phosphoserine modification. Positions 1462-1474 (PAEHAHPRGDTKL) are enriched in basic and acidic residues. Phosphoserine is present on S1479.

As to quaternary structure, homodimer. Interacts with GOLGA7. Interacts with GOPC. Cleaved by caspases in apoptotic cells. In terms of tissue distribution, highly expressed in testis. Transcripts can be found in spermatids during spermatogenesis. No expression in Leydig cells, spermatogonia or spermatocytes. Detected at low levels in all tissues.

It is found in the cytoplasm. Its subcellular location is the golgi apparatus. The protein localises to the golgi stack membrane. In terms of biological role, plays an important role in spermatogenesis and/or testis development. Probably identical with the serologically detectable male antigen (SDM). Probably involved in maintaining Golgi structure. This is Golgin subfamily A member 3 (Golga3) from Mus musculus (Mouse).